Here is a 335-residue protein sequence, read N- to C-terminus: Glycerol-3-phosphate dehydrogenase [NAD(P)+] (335 aa).

Residues Trp14, Arg33, and Lys111 each coordinate NADPH. 3 residues coordinate sn-glycerol 3-phosphate: Lys111, Gly140, and Ser142. NADPH is bound at residue Ala144. The sn-glycerol 3-phosphate site is built by Lys195, Asp248, Ser258, Arg259, and Asn260. Residue Lys195 is the Proton acceptor of the active site. Arg259 is a binding site for NADPH. Residues Val283 and Glu285 each coordinate NADPH.

This sequence belongs to the NAD-dependent glycerol-3-phosphate dehydrogenase family.

It localises to the cytoplasm. It catalyses the reaction sn-glycerol 3-phosphate + NAD(+) = dihydroxyacetone phosphate + NADH + H(+). The catalysed reaction is sn-glycerol 3-phosphate + NADP(+) = dihydroxyacetone phosphate + NADPH + H(+). It functions in the pathway membrane lipid metabolism; glycerophospholipid metabolism. Its function is as follows. Catalyzes the reduction of the glycolytic intermediate dihydroxyacetone phosphate (DHAP) to sn-glycerol 3-phosphate (G3P), the key precursor for phospholipid synthesis. This chain is Glycerol-3-phosphate dehydrogenase [NAD(P)+], found in Burkholderia mallei (strain NCTC 10247).